We begin with the raw amino-acid sequence, 147 residues long: Ubiquitin-conjugating enzyme E2 D3 (147 aa).

Positions 1–147 (MALKRINKEL…SREWTQKYAM (147 aa)) constitute a UBC core domain. Cysteine 21 and cysteine 107 are disulfide-bonded. Cysteine 85 functions as the Glycyl thioester intermediate in the catalytic mechanism.

It belongs to the ubiquitin-conjugating enzyme family. Interacts with SCF (SKP1-CUL1-F-box protein) E3 ubiquitin ligase complex; when Cullin is neddylated, the interaction between the E2 and the SCF complex is strengthened. Interacts with DAPK3. Interacts with BRCA1; the DNA damage checkpoint promotes the association with BRCA1 after ionizing radiation. Interacts non-covalently with ubiquitin. Interacts with E3 ubiquitin-protein ligase CBLC. Interacts with UBTD1. Interacts with RIGI and RNF135; involved in RIGI ubiquitination and activation. Post-translationally, phosphorylated by AURKB.

It is found in the cell membrane. It localises to the endosome membrane. The catalysed reaction is S-ubiquitinyl-[E1 ubiquitin-activating enzyme]-L-cysteine + [E2 ubiquitin-conjugating enzyme]-L-cysteine = [E1 ubiquitin-activating enzyme]-L-cysteine + S-ubiquitinyl-[E2 ubiquitin-conjugating enzyme]-L-cysteine.. It carries out the reaction S-ubiquitinyl-[E1 ubiquitin-activating enzyme]-L-cysteine + [acceptor protein]-L-lysine = [E1 ubiquitin-activating enzyme]-L-cysteine + N(6)-monoubiquitinyl-[acceptor protein]-L-lysine.. Its pathway is protein modification; protein ubiquitination. Accepts ubiquitin from the E1 complex and catalyzes its covalent attachment to other proteins. In vitro catalyzes 'Lys-11'-, as well as 'Lys-48'-linked polyubiquitination. Cooperates with the E2 CDC34 and the SCF(FBXW11) E3 ligase complex for the polyubiquitination of NFKBIA leading to its subsequent proteasomal degradation. Acts as an initiator E2, priming the phosphorylated NFKBIA target at positions 'Lys-21' and/or 'Lys-22' with a monoubiquitin. Ubiquitin chain elongation is then performed by CDC34, building ubiquitin chains from the UBE2D3-primed NFKBIA-linked ubiquitin. Also acts as an initiator E2, in conjunction with RNF8, for the priming of PCNA. Monoubiquitination of PCNA, and its subsequent polyubiquitination, are essential events in the operation of the DNA damage tolerance (DDT) pathway that is activated after DNA damage caused by UV or chemical agents during S-phase. Associates with the BRCA1/BARD1 E3 ligase complex to perform ubiquitination at DNA damage sites following ionizing radiation leading to DNA repair. Targets DAPK3 for ubiquitination which influences promyelocytic leukemia protein nuclear body (PML-NB) formation in the nucleus. In conjunction with the MDM2 and TOPORS E3 ligases, functions ubiquitination of p53/TP53. In conjunction with the CBL E3 ligase, targets EGFR for polyubiquitination at the plasma membrane as well as during its internalization and transport on endosomes. In conjunction with the STUB1 E3 quality control E3 ligase, ubiquitinates unfolded proteins to catalyze their immediate destruction. Together with RNF135, catalyzes the viral RNA-dependent 'Lys-63'-linked polyubiquitination of RIGI to activate the downstream signaling pathway that leads to interferon beta production. Together with ZNF598, catalyzes ubiquitination of 40S ribosomal proteins in response to ribosome collisions. In cooperation with the GATOR2 complex, catalyzes 'Lys-6'-linked ubiquitination of NPRL2. This is Ubiquitin-conjugating enzyme E2 D3 (UBE2D3) from Homo sapiens (Human).